Consider the following 562-residue polypeptide: MVVPGNSHGIPRDHAIDLSDRAMDLEAEPGQSSDLKEVQKLHELVKRLEIQNQQLKIKRNPQDNHLSALNCTGVMNSINIQPEKGDLQIMPNLQSQLEQINSEKENIPALRMDAQMQYEKVCSDSKPGHKVEIHCDQDDSCFYSVDGSGRSELEEAISKMSELNSSGENILDETALDEVDVLELGSCSEDEEDCWLYVSPRKVENAEQKPDSPLKWCRQVLDHHSPETEAACRSLIGKLDQGYLSIHSALSSQSSVDSELSTSDDSISMGYKLQDLTDVQVMARLQEESLRQDYASSSASVSRRSSSASLHSLRRGTFSDQEFDTYSLEDEDDCDCSLSFRSSHRYSPSPLSSPRCQSPSAAESRATTSRIRPPRRSIQNHVQERMKYANCEDEMRHSMPNLAKTSLRSLEAVRSSRSLESDLQGPSSRLTRMQQPSTSTPPSKMRYGASNQPALTARQPIKPGVSTSSLLTSRQAIKSSGYNNSSGIRKIQSSPGLNPSGSSAVSRTGNVSSSIKHSTVKSQASMGSTVPKSKMIQPSRRSLPSAKMNSTLGDDSWKDGCY.

Disordered stretches follow at residues 292-313 (QDYASSSASVSRRSSSASLHSL), 344-381 (HRYSPSPLSSPRCQSPSAAESRATTSRIRPPRRSIQNH), and 409-562 (SLEA…DGCY). Low complexity-rich tracts occupy residues 295 to 311 (ASSSASVSRRSSSASLH) and 345 to 355 (RYSPSPLSSPR). 4 stretches are compositionally biased toward polar residues: residues 356 to 370 (CQSPSAAESRATTSR), 424 to 442 (QGPSSRLTRMQQPSTSTPP), 465 to 531 (VSTS…STVP), and 539 to 553 (SRRSLPSAKMNSTLG).

It belongs to the SLAIN motif-containing family.

The polypeptide is SLAIN motif-containing protein-like (Xenopus laevis (African clawed frog)).